We begin with the raw amino-acid sequence, 53 residues long: Bowman-Birk type proteinase inhibitor II-4 (53 aa).

4 disulfides stabilise this stretch: cysteine 8–cysteine 23, cysteine 13–cysteine 21, cysteine 30–cysteine 37, and cysteine 34–cysteine 49.

The protein belongs to the Bowman-Birk serine protease inhibitor family.

The chain is Bowman-Birk type proteinase inhibitor II-4 from Triticum aestivum (Wheat).